A 237-amino-acid chain; its full sequence is Protein YIPF4 (237 aa).

The Cytoplasmic portion of the chain corresponds to 1 to 106; the sequence is MQFSPTNGDF…FNRQVVRDNP (106 aa). The chain crosses the membrane as a helical span at residues 107–127; it reads DFWGPLAVVLLFSMISIYGQF. The Lumenal segment spans residues 128-131; the sequence is RVVS. Residues 132 to 152 traverse the membrane as a helical segment; sequence WIITIWIFGSLTIFLLARVLG. The Cytoplasmic segment spans residues 153 to 160; the sequence is GEVSYGQV. A helical transmembrane segment spans residues 161 to 181; the sequence is LGVIGYSLLPLIVIAPLLLVI. Over 182–188 the chain is Lumenal; it reads GGFEVVS. The chain crosses the membrane as a helical span at residues 189-209; sequence TLIKLFGVFWAAYSAASLLVG. At 210–216 the chain is on the cytoplasmic side; the sequence is DEFKTKK. A helical membrane pass occupies residues 217–237; it reads PLLIYPIFLLYIYFLSLYTGV.

It belongs to the YIP1 family.

It is found in the golgi apparatus. The protein resides in the cis-Golgi network membrane. In terms of biological role, involved in the maintenance of the Golgi structure. The sequence is that of Protein YIPF4 (yipf4) from Danio rerio (Zebrafish).